The sequence spans 232 residues: MAHGVPFDHNYYIVECKEETNAEAQAGAMAATSTEEAPGAVEVAQAAVASSHDSGGAIGCATVKESESDSESESDSESESDSSDSSDESDDDSSTSDEDTSDPEEAAAPSVAAVAAAAAPPTVPAAAAIQIPGPYRYRPPRRHVRRRRRGPPFHFAQWQVEEMESLFEETQYPDLLTRGELARTLNVPEVKVKVWFTNRRAKQRKIERREMLRNIPPGAEDFIFITDFEEPS.

The tract at residues 45-114 (QAAVASSHDS…EAAAPSVAAV (70 aa)) is disordered. The span at 68-105 (SDSESESDSESESDSSDSSDESDDDSSTSDEDTSDPEE) shows a compositional bias: acidic residues. The segment at residues 148–207 (RRGPPFHFAQWQVEEMESLFEETQYPDLLTRGELARTLNVPEVKVKVWFTNRRAKQRKIE) is a DNA-binding region (homeobox).

It belongs to the paired-like homeobox family.

It localises to the nucleus. Probable transcription factor. This chain is Homeobox protein Rhox13, found in Mus musculus (Mouse).